Reading from the N-terminus, the 377-residue chain is MSLVRLAHELPIEAPRTAWLDSIIKGDCVSALERLPDHSVDVIFADPPYNLQLGGDLHRPDQSMVSAVDDHWDQFESFQAYDAFTRAWLLACRRVLKPNGTIWVIGSYHNIFRVGTQLQDLGFWLLNDIVWRKTNPMPNFRGRRFQNAHETLIWASRDQKGKGYTFNYEAMKAANDDVQMRSDWLFPICTGSERLKDENGDKVHPTQKPEALLARIMMASSKPGDVILDPFFGSGTTGAVAKRLGRHFVGIEREQPYIDAATARINAVEPLGKAELTVMTGKRAEPRVAFTSVMEAGLLRPGTVLCDERRRFAAIVRADGTLTANGEAGSIHRIGARVQGFDACNGWTFWHFEENGVLKPIDALRKIIREQMAAAGA.

The RAMA domain occupies 271–373 (LGKAELTVMT…LRKIIREQMA (103 aa)).

The protein belongs to the N(4)/N(6)-methyltransferase family.

The enzyme catalyses a 2'-deoxyadenosine in DNA + S-adenosyl-L-methionine = an N(6)-methyl-2'-deoxyadenosine in DNA + S-adenosyl-L-homocysteine + H(+). In terms of biological role, a beta subtype methylase that recognizes the double-stranded sequence 5'-GANTC-3' and methylates A-2 on both strands. CcrM-mediated methylation has important cellular functions. Contributes to the accurate cell-cycle control of DNA replication and cellular morphology. The chain is DNA methyltransferase CcrM (ccrM) from Brucella canis (strain ATCC 23365 / NCTC 10854 / RM-666).